The following is a 428-amino-acid chain: Histone-lysine N-methyltransferase SMYD3 (428 aa).

Methionine 1 is modified (N-acetylmethionine). The region spanning 4–240 is the SET domain; the sequence is LKVEKFATAK…VGEELTICYL (237 aa). 14–16 provides a ligand contact to S-adenosyl-L-methionine; sequence RGN. Threonine 22 is modified (phosphothreonine). Zn(2+)-binding residues include cysteine 49, cysteine 52, cysteine 62, cysteine 65, cysteine 71, cysteine 75, histidine 83, and cysteine 87. The MYND-type zinc-finger motif lies at 49 to 87; the sequence is CDRCLLGKEKLMRCSQCRVAKYCSAKCQKKAWPDHKREC. S-adenosyl-L-methionine-binding positions include tyrosine 124, asparagine 132, asparagine 181, 205–206, tyrosine 239, and phenylalanine 259; that span reads NH. Positions 272–428 are C-terminal domain; essential for histone methyltransferase activity, nuclear localization and mediates interaction with HSP90AA1; that stretch reads DADMLTGDEQ…EECDANIRAS (157 aa).

The protein belongs to the class V-like SAM-binding methyltransferase superfamily. Histone-lysine methyltransferase family. As to quaternary structure, interacts with HSPCA. Interacts with HELZ. Interacts with POLR2A; the interaction may be indirect and may be mediated by HELZ. Interacts with HSP90AA1; this interaction enhances SMYD3 histone-lysine N-methyltransferase. In terms of tissue distribution, expressed in skeletal muscles and testis. Overexpressed in a majority of colorectal and hepatocellular carcinomas.

The protein resides in the cytoplasm. The protein localises to the nucleus. It carries out the reaction L-lysyl(4)-[histone H3] + 3 S-adenosyl-L-methionine = N(6),N(6),N(6)-trimethyl-L-lysyl(4)-[histone H3] + 3 S-adenosyl-L-homocysteine + 3 H(+). Its activity is regulated as follows. Histone methyltransferase activity strongly stimulated by HSPCA. Histone methyltransferase. Specifically methylates 'Lys-4' of histone H3, inducing di- and tri-methylation, but not monomethylation. Also methylates 'Lys-5' of histone H4. Plays an important role in transcriptional activation as a member of an RNA polymerase complex. Binds DNA containing 5'-CCCTCC-3' or 5'-GAGGGG-3' sequences. The protein is Histone-lysine N-methyltransferase SMYD3 (SMYD3) of Homo sapiens (Human).